The chain runs to 357 residues: UDP-N-acetylglucosamine--N-acetylmuramyl-(pentapeptide) pyrophosphoryl-undecaprenol N-acetylglucosamine transferase (357 aa).

UDP-N-acetyl-alpha-D-glucosamine is bound by residues 15-17, Asn-124, Arg-165, Ser-194, and Gln-288; that span reads TGG.

Belongs to the glycosyltransferase 28 family. MurG subfamily.

The protein resides in the cell inner membrane. The enzyme catalyses di-trans,octa-cis-undecaprenyl diphospho-N-acetyl-alpha-D-muramoyl-L-alanyl-D-glutamyl-meso-2,6-diaminopimeloyl-D-alanyl-D-alanine + UDP-N-acetyl-alpha-D-glucosamine = di-trans,octa-cis-undecaprenyl diphospho-[N-acetyl-alpha-D-glucosaminyl-(1-&gt;4)]-N-acetyl-alpha-D-muramoyl-L-alanyl-D-glutamyl-meso-2,6-diaminopimeloyl-D-alanyl-D-alanine + UDP + H(+). The protein operates within cell wall biogenesis; peptidoglycan biosynthesis. In terms of biological role, cell wall formation. Catalyzes the transfer of a GlcNAc subunit on undecaprenyl-pyrophosphoryl-MurNAc-pentapeptide (lipid intermediate I) to form undecaprenyl-pyrophosphoryl-MurNAc-(pentapeptide)GlcNAc (lipid intermediate II). The sequence is that of UDP-N-acetylglucosamine--N-acetylmuramyl-(pentapeptide) pyrophosphoryl-undecaprenol N-acetylglucosamine transferase from Trichormus variabilis (strain ATCC 29413 / PCC 7937) (Anabaena variabilis).